Reading from the N-terminus, the 1409-residue chain is MKSSGPVERLLRALGRRDSSRAASRPRKAEPHSFREKVFRKKPPVCAVCKVTIDGTGVSCRVCKVATHRKCEAKVTSACQALPPVELRRNTAPVRRIEHLGSTKSLNHSKQRSTLPRSFSLDPLMERRWDLDLTYVTERILAAAFPARPDEQRHRGHLRELAHVLQSKHRDKYLLFNLSEKRHDLTRLNPKVQDFGWPELHAPPLDKLCSICKAMETWLSADPQHVVVLYCKGNKGKLGVIVSAYMHYSKISAGADQALATLTMRKFCEDKVATELQPSQRRYISYFSGLLSGSIRMNSSPLFLHYVLIPMLPAFEPGTGFQPFLKIYQSMQLVYTSGVYHIAGPGPQQLCISLEPALLLKGDVMVTCYHKGGRGTDRTLVFRVQFHTCTIHGPQLTFPKDQLDEAWTDERFPFQASVEFVFSSSPEKIKGSTPRNDPSVSVDYNTTEPAVRWDSYENFNQHHEDSVDGSLTHTRGPLDGSPYAQVQRPPRQTPPAPSPEPPPPPMLSVSSDSGHSSTLTTEPAAESPGRPPPTAAERQELDRLLGGCGVASGGRGAGRETAILDDEEQPTVGGGPHLGVYPGHRPGLSRHCSCRQGYREPCGVPNGGYYRPEGTLERRRLAYGGYEGSPQGYAEASMEKRRLCRSLSEGLYPYPPEMGKPATGDFGYRAPGYREVVILEDPGLPALYPCPACEEKLALPTAALYGLRLEREAGEGWASEAGKPLLHPVRPGHPLPLLLPACGHHHAPMPDYSCLKPPKAGEEGHEGCSYTMCPEGRYGHPGYPALVTYSYGGAVPSYCPAYGRVPHSCGSPGEGRGYPSPGAHSPRAGSISPGSPPYPQSRKLSYEIPTEEGGDRYPLPGHLASAGPLASAESLEPVSWREGPSGHSTLPRSPRDAPCSASSELSGPSTPLHTSSPVQGKESTRRQDTRSPTSAPTQRLSPGEALPPVSQAGTGKAPELPSGSGPEPLAPSPVSPTFPPSSPSDWPQERSPGGHSDGASPRSPVPTTLPGLRHAPWQGPRGPPDSPDGSPLTPVPSQMPWLVASPEPPQSSPTPAFPLAASYDTNGLSQPPLPEKRHLPGPGQQPGPWGPEQASSPARGISHHVTFAPLLSDNVPQTPEPPTQESQSNVKFVQDTSKFWYKPHLSRDQAIALLKDKDPGAFLIRDSHSFQGAYGLALKVATPPPSAQPWKGDPVEQLVRHFLIETGPKGVKIKGCPSEPYFGSLSALVSQHSISPISLPCCLRIPSKDPLEETPEAPVPTNMSTAADLLRQGAACSVLYLTSVETESLTGPQAVARASSAALSCSPRPTPAVVHFKVSAQGITLTDNQRKLFFRRHYPVNSITFSSTDPQDRRWTNPDGTTSKIFGFVAKKPGSPWENVCHLFAELDPDQPAGAIVTFITKVLLGQRK.

Residues 1 to 35 are disordered; sequence MKSSGPVERLLRALGRRDSSRAASRPRKAEPHSFR. The span at 9 to 20 shows a compositional bias: basic and acidic residues; the sequence is RLLRALGRRDSS. The Phorbol-ester/DAG-type zinc-finger motif lies at 31-79; sequence PHSFREKVFRKKPPVCAVCKVTIDGTGVSCRVCKVATHRKCEAKVTSAC. Thr-91 bears the Phosphothreonine mark. Phosphoserine occurs at positions 118 and 120. In terms of domain architecture, Phosphatase tensin-type spans 122–294; that stretch reads DPLMERRWDL…SYFSGLLSGS (173 aa). Catalysis depends on Cys-231, which acts as the Phosphocysteine intermediate. Residues 299–425 form the C2 tensin-type domain; sequence SSPLFLHYVL…ASVEFVFSSS (127 aa). Residue Ser-455 is modified to Phosphoserine. Tyr-456 bears the Phosphotyrosine mark. The tract at residues 462 to 536 is disordered; it reads HHEDSVDGSL…SPGRPPPTAA (75 aa). The residue at position 466 (Ser-466) is a Phosphoserine. Residue Thr-474 is modified to Phosphothreonine. Ser-481 bears the Phosphoserine mark. A Phosphotyrosine modification is found at Tyr-483. The segment covering 491–506 has biased composition (pro residues); the sequence is RQTPPAPSPEPPPPPM. Omega-N-methylarginine is present on Arg-555. Disordered stretches follow at residues 562–582, 812–1098, and 1111–1130; these read AILD…GVYP, PGEG…SSPA, and LSDN…QSNV. Residues Ser-820, Ser-825, Ser-830, Ser-832, Ser-835, and Ser-845 each carry the phosphoserine modification. 2 stretches are compositionally biased toward polar residues: residues 900 to 918 and 930 to 940; these read SASS…SSPV and RSPTSAPTQRL. A Phosphothreonine modification is found at Thr-910. A phosphoserine mark is found at Ser-931, Ser-941, and Ser-972. Residues 968-982 show a composition bias toward pro residues; sequence PLAPSPVSPTFPPSS. Thr-977 bears the Phosphothreonine mark. A phosphoserine mark is found at Ser-991 and Ser-1003. Residues 1046–1056 show a composition bias toward pro residues; that stretch reads PEPPQSSPTPA. The SH2 domain maps to 1140 to 1247; it reads WYKPHLSRDQ…SLPCCLRIPS (108 aa). A Phosphothreonine modification is found at Thr-1182. Phosphoserine is present on Ser-1247. Residues 1275-1408 enclose the PTB domain; sequence ACSVLYLTSV…FITKVLLGQR (134 aa).

The protein belongs to the PTEN phosphatase protein family. In terms of assembly, interacts with AXL. Interacts with SYK; leading to its phosphorylation. Interacts with SQSTM1 (via PB1 domain); the interaction leads to sequestration of TNS2 in cytoplasmic aggregates with SQSTM1 and promotes TNS2 ubiquitination and proteasomal degradation. Ubiquitinated following sequestration in cytoplasmic aggregates with SQSTM1, leading to proteasomal degradation. Detected in heart, kidney, brain, thymus, spleen, liver, placenta, lung, skeletal muscle and small intestine.

The protein localises to the cell junction. It localises to the focal adhesion. The protein resides in the cell membrane. It is found in the cytoplasm. It carries out the reaction O-phospho-L-tyrosyl-[protein] + H2O = L-tyrosyl-[protein] + phosphate. Functionally, tyrosine-protein phosphatase which regulates cell motility, proliferation and muscle-response to insulin. Phosphatase activity is mediated by binding to phosphatidylinositol-3,4,5-triphosphate (PtdIns(3,4,5)P3) via the SH2 domain. In muscles and under catabolic conditions, dephosphorylates IRS1 leading to its degradation and muscle atrophy. Negatively regulates PI3K-AKT pathway activation. Dephosphorylates nephrin NPHS1 in podocytes which regulates activity of the mTORC1 complex. Under normal glucose conditions, NPHS1 outcompetes IRS1 for binding to phosphatidylinositol 3-kinase (PI3K) which balances mTORC1 activity but high glucose conditions lead to up-regulation of TNS2, increased NPHS1 dephosphorylation and activation of mTORC1, contributing to podocyte hypertrophy and proteinuria. Required for correct podocyte morphology, podocyte-glomerular basement membrane interaction and integrity of the glomerular filtration barrier. Enhances RHOA activation in the presence of DLC1. Plays a role in promoting DLC1-dependent remodeling of the extracellular matrix. The chain is Tensin-2 (TNS2) from Homo sapiens (Human).